The chain runs to 167 residues: Thioredoxin-like protein HI_1115 (167 aa).

The helical transmembrane segment at 10-27 (GLSLFLTFIVITSILDFV) threads the bilayer. In terms of domain architecture, Thioredoxin spans 30–167 (PVVPEEINKI…VRLFFAEFFG (138 aa)). An intrachain disulfide couples Cys-69 to Cys-72.

The protein belongs to the thioredoxin family.

It is found in the cell membrane. The protein is Thioredoxin-like protein HI_1115 of Haemophilus influenzae (strain ATCC 51907 / DSM 11121 / KW20 / Rd).